The chain runs to 114 residues: MCVATCLCTFAYVLAKSDEGENLISKVEETQRGCIEIGGDCDGYLDKSYCQCCRNNGFCSCYKVPEWFGYKVGCKCSVDWNFVGWCRLKQFCPGGSQNPSLCKDPNPRRRRHGK.

Positions 1–15 are cleaved as a signal peptide; sequence MCVATCLCTFAYVLA. The propeptide occupies 16-32; sequence KSDEGENLISKVEETQR. Disulfide bonds link Cys-34–Cys-53, Cys-41–Cys-59, Cys-50–Cys-86, Cys-52–Cys-76, and Cys-61–Cys-74. A disordered region spans residues 95 to 114; the sequence is GSQNPSLCKDPNPRRRRHGK.

This sequence belongs to the neurotoxin 04 (omega-agtx) family. 03 (type II/III omega-agtx) subfamily. Expressed by the venom gland.

Its subcellular location is the secreted. Its function is as follows. Inhibits voltage-gated calcium channels (Cav). The sequence is that of U10-agatoxin-Ao1a from Agelena orientalis (Funnel-web spider).